The primary structure comprises 575 residues: MLEKVETFDMNRVIDEFDEMTRNAHQVQKQTLKEILLKNQSAIYLQNCGLNGNATDPEEAFKSMVPLVTDVELEPYIKRMVDGDTSPILTGHPVPAISLSSGTSQGRPKFIPFTDELMENTLQLFRTAFAFRNRDFPIDDNGKALQFIFSSKQYISTGGVPVGTATTNVYRNPNFKAGMKSITSPSCSPDEVIFSPDVHQALYCHLLSGILFRDQVQYVFAVFAHGLVHAFRTFEQVWEEIVTDIKDGVLSNRITVPSVRTAMSKLLTPNPELAETIRTKCMSLSNWYGLIPALFPNAKYVYGIMTGSMEPYVPKLRHYAGDLPLVSHDYGSSEGWIAANVTPRLSPEEATFAVIPNLGYFEFLPVSETGEGEEKPVGLTQVKIGEEYEVVITNYAGLYRYRLGDVVKVIGFYNNTPQLKFICRRNLILSINIDKNTERDLQLSVESAAKRLSEEKIEVIDFSSYIDVSTDPGHYAIFWEISGETNEDVLQDCCNCLDRAFIDAGYVSSRKCKTIGALELRVVAKGTFRKIQEHFLGLGSSAGQFKMPRCVKPSNAKVLQILCENVVSSYFSTAF.

The stretch at 10–30 forms a coiled coil; the sequence is MNRVIDEFDEMTRNAHQVQKQ. Ser-98 contacts ATP. Ser-101 serves as a coordination point for jasmonate. ATP contacts are provided by residues Met-118, Thr-121, Gly-163, Asn-168, and 331-336; that span reads GSSEGW. 166 to 170 is a binding site for an L-alpha-amino acid; that stretch reads TTNVY. Jasmonate is bound at residue 328 to 331; it reads HDYG. 530–534 serves as a coordination point for an L-alpha-amino acid; it reads KIQEH. Lys-557 contributes to the ATP binding site.

Belongs to the IAA-amido conjugating enzyme family. In terms of assembly, interacts with GSTU20/FIP1 under continuous far red (cFR) light; this binding increases its activity and determines the priority of substrate binding.

The protein resides in the cytoplasm. It catalyses the reaction a jasmonate + an L-alpha-amino acid + ATP = a jasmonyl-L-amino acid + AMP + diphosphate + H(+). The catalysed reaction is (+)-7-isojasmonate + L-isoleucine + ATP = L-isoleucine-(+)-7-isojasmonate + AMP + diphosphate + H(+). Its activity is regulated as follows. Activated by GSTU20/FIP1. Catalyzes the synthesis of jasmonates-amino acid conjugates by adenylation; can use Ile and, in vitro at least, Val, Leu and Phe as conjugating amino acids on jasmonic acid (JA) and 9,10-dihydro-JA substrates, and to a lower extent, on 3-oxo-2-(2Z-pentenyl)-cyclopentane-1-butyric acid (OPC-4) and 12-hydroxy-JA (12-OH-JA). Can synthesize adenosine 5-tetraphosphate in vitro. Required for the JA-mediated signaling pathway that regulates many developmental and defense mechanisms, including growth root inhibition, vegetative storage proteins (VSPs) accumulation, induced systemic resistance (ISR), response to wounding and herbivores, tolerance to ozone O(3) (probably having a role in lesion containment). Plays an important role in the accumulation of JA-Ile in response to wounding, both locally and systemically; promotes JA responding genes especially in distal part of wounded plants, via the JA-Ile-stimulated degradation of JAZ repressor proteins by the SCF(COI)E3 ubiquitin-protein ligase pathway. Involved in the apoptosis-like programmed cell death (PCD) induced by fungal toxin fumonisin B1-mediated (FB1). Required for volatile compounds (C6-aldehydes and allo-ocimene)-mediated defense activation. Involved in the non-pathogenic rhizobacterium-mediated ISR (defense priming) by P.fluorescens (strains CHAOr and WCS417r) and P.putida LSW17S against infection leaf pathogens such as P.syringae pv. tomato and H.parasitica. Required for the JA-dependent resistance to fungi such as P.irregulare, U.vignae and U.appendiculatus. Necessary to induce systemic resistance against R.solanaceraum and P.syringae pv. tomato with P.oligandrum (a non-pathogenic biocontrol agent) cell wall protein fraction (CWP). Mediates PGIP2 accumulation in response to B.cinerea infection and thus contributes to resistance against this pathogen. Modulates the UV-B alteration of leaves attractiveness to diamondback moths P.xylostella leading to insect oviposition. Involved in the regulation of far-red light influence on development, being an actor of the interplay between light and JA signaling. Seems necessary for the salicylic acid (SA)-mediated, NPR1-independent resistance pathway. May contribute to the chitin-elicited pathway. Contributes to the sensitivity toward F.graminearum. The chain is Jasmonoyl--L-amino acid synthetase JAR1 from Arabidopsis thaliana (Mouse-ear cress).